Here is a 551-residue protein sequence, read N- to C-terminus: MAENWKNCFEEELICPICLHVFVEPVQLPCKHNFCRGCIGEAWAKDSGLVRCPECNQAYNQKPGLEKNLKLTNIVEKFNALHVEKPPTALHCVFCRRGPPLPAQKVCLRCEAPCCQSHVQTHLQQPSTARGHLLVEADDVRAWSCPQHNAYRLYHCEAEQVAVCQYCCYYSGAHQGHSVCDVEIRRNEIRKMLMKQQERLEEREQDIEDQLYKLESDKRLVEEKVSQLKEEVRLQYEKLHQLLDEDLRQTVEVLDKAQAKFCSENAAQALHLGERMQEAKKLLGSLQRLFDKTEDVGFMKNTKSVKILMDRTQTCTGSSLSPPKIGHLNSKLFLNEVAKKEKQLRKMLEGPFSTPVPFLQSVPLYPCGVNSSGAEKRKHSTAFPEASFLETSSGPVGGQYGAAGTASSEGQSGQPLGPCSSTQHLVALPGGTQPVHSSPVFPPSQYPNGSTTQQPMLPQYGGRKILVCSVDNCYCSSVANHGGHQPYPRSGHFPWTVPSQEYSHPLPPTPSVPQSLPGLAVRDWLDASQQPGHQDFYRVYGQPSTKHYVTS.

The RING-type zinc-finger motif lies at 15–56 (CPICLHVFVEPVQLPCKHNFCRGCIGEAWAKDSGLVRCPECN). 2 B box-type zinc fingers span residues 92-132 (CVFC…ARGH) and 140-182 (VRAW…VCDV). 2 coiled-coil regions span residues 181–249 (DVEI…DLRQ) and 274–295 (ERMQEAKKLLGSLQRLFDKTED). The segment at 399–457 (QYGAAGTASSEGQSGQPLGPCSSTQHLVALPGGTQPVHSSPVFPPSQYPNGSTTQQPML) is disordered. Composition is skewed to polar residues over residues 405–424 (TASSEGQSGQPLGPCSSTQH) and 446–456 (YPNGSTTQQPM).

This sequence belongs to the TRIM/RBCC family. In terms of assembly, homodimer. Interacts with SOCS1 (via) SH2 domain and SOCS box. Interacts with HSP90AB1; prevents nucleus translocation of phosphorylated STAT3 and HSP90AB1. Interacts with MAP3K7/TAK1. Interacts with PIAS3. Interacts with TICAM1. Interacts with TRIM15; this interaction prevents TRIM8 cytoplasmic translocation. As to expression, high expression in heart, liver, and thymus. Expressed in embryonic CNS, kidney, lens and gut.

The catalysed reaction is S-ubiquitinyl-[E2 ubiquitin-conjugating enzyme]-L-cysteine + [acceptor protein]-L-lysine = [E2 ubiquitin-conjugating enzyme]-L-cysteine + N(6)-ubiquitinyl-[acceptor protein]-L-lysine.. It functions in the pathway protein modification; protein ubiquitination. In terms of biological role, E3 ubiquitin-protein ligase that participates in multiple biological processes including cell survival, differentiation, apoptosis, and in particular, the innate immune response. Participates in the activation of interferon-gamma signaling by promoting proteasomal degradation of the repressor SOCS1. Plays a positive role in the TNFalpha and IL-1beta signaling pathways. Mechanistically, induces the 'Lys-63'-linked polyubiquitination of MAP3K7/TAK1 component leading to the activation of NF-kappa-B. Also modulates STAT3 activity through negative regulation of PIAS3, either by degradation of PIAS3 through the ubiquitin-proteasome pathway or exclusion of PIAS3 from the nucleus. Negatively regulates TLR3/4-mediated innate immune response by catalyzing 'Lys-6'- and 'Lys-33'-linked polyubiquitination of TICAM1 and thereby disrupting the TICAM1-TBK1 interaction. In Mus musculus (Mouse), this protein is E3 ubiquitin-protein ligase TRIM8 (Trim8).